The chain runs to 229 residues: Triosephosphate isomerase (229 aa).

Substrate is bound at residue 16–18 (NFK). Histidine 100 functions as the Electrophile in the catalytic mechanism. The active-site Proton acceptor is the glutamate 148. Residues isoleucine 153, glycine 188, and 209 to 210 (AS) contribute to the substrate site.

It belongs to the triosephosphate isomerase family. Homotetramer; dimer of dimers.

It is found in the cytoplasm. The catalysed reaction is D-glyceraldehyde 3-phosphate = dihydroxyacetone phosphate. Its pathway is carbohydrate biosynthesis; gluconeogenesis. The protein operates within carbohydrate degradation; glycolysis; D-glyceraldehyde 3-phosphate from glycerone phosphate: step 1/1. In terms of biological role, involved in the gluconeogenesis. Catalyzes stereospecifically the conversion of dihydroxyacetone phosphate (DHAP) to D-glyceraldehyde-3-phosphate (G3P). The chain is Triosephosphate isomerase from Methanothermobacter thermautotrophicus (strain ATCC 29096 / DSM 1053 / JCM 10044 / NBRC 100330 / Delta H) (Methanobacterium thermoautotrophicum).